The primary structure comprises 367 residues: Quinolinate synthase (367 aa).

Residues histidine 45 and serine 62 each coordinate iminosuccinate. Residue cysteine 109 participates in [4Fe-4S] cluster binding. Iminosuccinate contacts are provided by residues 140 to 142 and serine 161; that span reads YVN. [4Fe-4S] cluster is bound at residue cysteine 229. Iminosuccinate-binding positions include 255-257 and threonine 272; that span reads HPE. Position 319 (cysteine 319) interacts with [4Fe-4S] cluster.

The protein belongs to the quinolinate synthase family. Type 3 subfamily. It depends on [4Fe-4S] cluster as a cofactor.

Its subcellular location is the cytoplasm. The catalysed reaction is iminosuccinate + dihydroxyacetone phosphate = quinolinate + phosphate + 2 H2O + H(+). The protein operates within cofactor biosynthesis; NAD(+) biosynthesis; quinolinate from iminoaspartate: step 1/1. In terms of biological role, catalyzes the condensation of iminoaspartate with dihydroxyacetone phosphate to form quinolinate. The chain is Quinolinate synthase from Geobacillus kaustophilus (strain HTA426).